Consider the following 841-residue polypeptide: Protein translocase subunit SecA (841 aa).

ATP-binding positions include Q87, G105–T109, and D494. Zn(2+)-binding residues include C825, C827, C836, and C837.

Belongs to the SecA family. As to quaternary structure, monomer and homodimer. Part of the essential Sec protein translocation apparatus which comprises SecA, SecYEG and auxiliary proteins SecDF-YajC and YidC. The cofactor is Zn(2+).

Its subcellular location is the cell inner membrane. The protein resides in the cytoplasm. It catalyses the reaction ATP + H2O + cellular proteinSide 1 = ADP + phosphate + cellular proteinSide 2.. Functionally, part of the Sec protein translocase complex. Interacts with the SecYEG preprotein conducting channel. Has a central role in coupling the hydrolysis of ATP to the transfer of proteins into and across the cell membrane, serving as an ATP-driven molecular motor driving the stepwise translocation of polypeptide chains across the membrane. The protein is Protein translocase subunit SecA of Syntrophus aciditrophicus (strain SB).